The following is a 359-amino-acid chain: Methylthioribose-1-phosphate isomerase (359 aa).

D235 acts as the Proton donor in catalysis.

The protein belongs to the eIF-2B alpha/beta/delta subunits family. MtnA subfamily.

The protein localises to the cytoplasm. It localises to the nucleus. The enzyme catalyses 5-(methylsulfanyl)-alpha-D-ribose 1-phosphate = 5-(methylsulfanyl)-D-ribulose 1-phosphate. Its pathway is amino-acid biosynthesis; L-methionine biosynthesis via salvage pathway; L-methionine from S-methyl-5-thio-alpha-D-ribose 1-phosphate: step 1/6. Functionally, catalyzes the interconversion of methylthioribose-1-phosphate (MTR-1-P) into methylthioribulose-1-phosphate (MTRu-1-P). In Schizosaccharomyces pombe (strain 972 / ATCC 24843) (Fission yeast), this protein is Methylthioribose-1-phosphate isomerase (mri1).